The following is a 480-amino-acid chain: MVKEPNGVTRTMRRIRRIHFVGIGGAGMCGIAEVLLNLGYEVSGSDLKASAVTERLEKFGAQIFIGHQAENADGADVLVVSSAINRANPEVASALERRIPVVPRAEMLAELMRYRHGIAVAGTHGKTTTTSLIASVFAAGGLDPTFVIGGRLNAAGTNAQLGASRYLVAEADESDASFLHLQPMVAVVTNIDADHMATYGGDFNKLKKTFVEFLHNLPFYGLAVMCVDDPVVREILPQIARPTVTYGLSEDADVRAINIRQEGMRTWFTVLRPEREPLDVSVNMPGLHNVLNSLATIVIATDEGISDEAIVQGLSGFQGVGRRFQVYGELQVEGGSVMLVDDYGHHPREVAAVIKAIRGGWPERRLVMVYQPHRYTRTRDLYEDFVQVLGEANVLLLMEVYPAGEEPIPGADSRQLCHSIRQRGQLDPIYFERDADLAPLVKPLLRAGDILLCQGAGDVGGLAPQLIKNPLFAGKGGKGA.

122–128 (GTHGKTT) serves as a coordination point for ATP.

Belongs to the MurCDEF family.

The protein localises to the cytoplasm. The enzyme catalyses UDP-N-acetyl-alpha-D-muramate + L-alanine + ATP = UDP-N-acetyl-alpha-D-muramoyl-L-alanine + ADP + phosphate + H(+). Its pathway is cell wall biogenesis; peptidoglycan biosynthesis. Functionally, cell wall formation. The polypeptide is UDP-N-acetylmuramate--L-alanine ligase (Pseudomonas aeruginosa (strain LESB58)).